The chain runs to 46 residues: Viscotoxin-C1 (46 aa).

Disulfide bonds link cysteine 3–cysteine 40, cysteine 4–cysteine 32, and cysteine 16–cysteine 26.

Monomer.

The protein resides in the secreted. Thionins are small plant proteins which are toxic to animal cells. They seem to exert their toxic effect at the level of the cell membrane. Their precise function is not known. This is Viscotoxin-C1 from Viscum album (European mistletoe).